The chain runs to 460 residues: Muscarinic acetylcholine receptor M1 (460 aa).

The Extracellular segment spans residues Met-1–Pro-22. N-linked (GlcNAc...) asparagine glycans are attached at residues Asn-2 and Asn-12. A helical transmembrane segment spans residues Trp-23 to Ile-48. Residues Ser-49–Tyr-62 are Cytoplasmic-facing. A helical transmembrane segment spans residues Phe-63–Thr-84. At Tyr-85 to Thr-95 the chain is on the extracellular side. The helical transmembrane segment at Leu-96–Phe-121 threads the bilayer. A disulfide bridge connects residues Cys-98 and Cys-178. Residues Asp-122–Ala-142 are Cytoplasmic-facing. Residues Ala-143–Trp-164 traverse the membrane as a helical segment. Residues Gln-165–Gln-185 lie on the Extracellular side of the membrane. The chain crosses the membrane as a helical span at residues Pro-186–Trp-209. At Arg-210–Thr-366 the chain is on the cytoplasmic side. Disordered stretches follow at residues Leu-225–Cys-259, Ser-273–Gly-297, and Glu-310–Lys-351. Thr-230 is modified (phosphothreonine). Residues Ser-238–Gly-247 show a composition bias toward low complexity. The segment covering Arg-328–Pro-343 has biased composition (basic residues). The chain crosses the membrane as a helical span at residues Leu-367–Phe-390. Residues Cys-391–Glu-401 are Extracellular-facing. The chain crosses the membrane as a helical span at residues Leu-402 to Leu-420. Residues Cys-421–Cys-460 are Cytoplasmic-facing. A Phosphothreonine modification is found at Thr-428. A Phosphoserine modification is found at Ser-451. Thr-455 carries the post-translational modification Phosphothreonine. Position 457 is a phosphoserine (Ser-457).

Belongs to the G-protein coupled receptor 1 family. Muscarinic acetylcholine receptor subfamily. CHRM1 sub-subfamily. In terms of assembly, interacts with GPRASP2. Interacts with TMEM147.

It is found in the cell membrane. The protein localises to the postsynaptic cell membrane. In terms of biological role, the muscarinic acetylcholine receptor mediates various cellular responses, including inhibition of adenylate cyclase, breakdown of phosphoinositides and modulation of potassium channels through the action of G proteins. Primary transducing effect is Pi turnover. In Macaca mulatta (Rhesus macaque), this protein is Muscarinic acetylcholine receptor M1 (CHRM1).